Consider the following 258-residue polypeptide: MNATHILESHEANEQHHATNRSYWEVTYNILVIMSIVFSMATYLILDKDRFEKNPLLRFAIILLPLSCSAIQYLFLLYTNWKSNYEPEGTLHKALYYFFNVLLIAFAIISILSIIVLPINGWKGDDLLSSIVLPSFFIPPTYLLSTSCCLVPGQIGFTDTGINVLIDILILLCPLVSLVLIPEEPKYRLIPAILFPVLILIRLLREKYYPSGKSALPTAPWRVAVFVLILIIAVFAYALMVWGSMVILNNHFGLLDIS.

This sequence belongs to the UPF0328 family.

The polypeptide is UPF0328 protein ECU07_0060 (Encephalitozoon cuniculi (strain GB-M1) (Microsporidian parasite)).